The primary structure comprises 167 residues: 18.8 kDa class II heat shock protein (167 aa).

One can recognise a sHSP domain in the interval 49 to 167 (DAKAMAATPA…KPKTVEVKVA (119 aa)).

It belongs to the small heat shock protein (HSP20) family.

Its subcellular location is the cytoplasm. The chain is 18.8 kDa class II heat shock protein (SHSP-2) from Ipomoea nil (Japanese morning glory).